A 650-amino-acid chain; its full sequence is Transcription factor LHW (650 aa).

Disordered stretches follow at residues 381–417 (LTKV…SSVY) and 431–470 (LKRE…DRQM). The span at 384–397 (VSNSSVTTPSHSSP) shows a compositional bias: low complexity. The Nuclear localization signal signature appears at 451-458 (NRKRLKPG). Residues 455 to 504 (LKPGENPRPRPKDRQMIQDRVKELREIIPNGAKCSIDALLERTIKHMLFL) form the bHLH domain. The segment covering 456-470 (KPGENPRPRPKDRQM) has biased composition (basic and acidic residues).

This sequence belongs to the bHLH protein family. LHW subfamily. Homodimer. Can also interact with bHLH proteins. As to expression, expressed in both root and shoot meristems. Present in root tips.

The protein resides in the nucleus. Its function is as follows. Transcription activator that regulates root development; promotes the production of stele cells in roots. Coordinately controls the number of all vascular cell types by regulating the size of the pool of cells from which they arise. In Arabidopsis thaliana (Mouse-ear cress), this protein is Transcription factor LHW (LHW).